A 129-amino-acid chain; its full sequence is Small ribosomal subunit protein uS11 (129 aa).

Belongs to the universal ribosomal protein uS11 family. In terms of assembly, part of the 30S ribosomal subunit. Interacts with proteins S7 and S18. Binds to IF-3.

Its function is as follows. Located on the platform of the 30S subunit, it bridges several disparate RNA helices of the 16S rRNA. Forms part of the Shine-Dalgarno cleft in the 70S ribosome. The sequence is that of Small ribosomal subunit protein uS11 from Nitratidesulfovibrio vulgaris (strain DSM 19637 / Miyazaki F) (Desulfovibrio vulgaris).